The following is a 526-amino-acid chain: Probable lipid II flippase MurJ (526 aa).

Helical transmembrane passes span 35-55 (LMGT…PNLF), 58-78 (LFAE…HYSM), 96-116 (AIFT…ILGA), 137-157 (MFPY…LHSI), 160-180 (FVPS…SMYF), 190-210 (IAAA…QLIF), 235-255 (IIAL…NDLV), 281-301 (LLGI…SFHV), 313-333 (LITA…FVLF), 362-382 (WHSV…AFYA), 391-411 (IAGT…FIPL), 415-435 (GIAF…WMFL), 459-479 (LFSV…AYFF), and 489-509 (GVPL…LLLL).

It belongs to the MurJ/MviN family.

Its subcellular location is the cell inner membrane. It functions in the pathway cell wall biogenesis; peptidoglycan biosynthesis. Involved in peptidoglycan biosynthesis. Transports lipid-linked peptidoglycan precursors from the inner to the outer leaflet of the cytoplasmic membrane. The protein is Probable lipid II flippase MurJ of Treponema pallidum (strain Nichols).